We begin with the raw amino-acid sequence, 540 residues long: Cytosolic carboxypeptidase 6 (540 aa).

Positions 167–438 constitute a Peptidase M14 domain; the sequence is YPYTYTRFQH…NVARTFLDYY (272 aa). The Zn(2+) site is built by histidine 230, glutamate 233, and histidine 328. Glutamate 401 functions as the Proton donor/acceptor in the catalytic mechanism.

Belongs to the peptidase M14 family. As to quaternary structure, interacts with MYLK. Zn(2+) is required as a cofactor. Widely expressed. Expressed abundantly in testis, pituitary and brain and to a lower extent in eye, stomach, adrenal and kidney. In brain, expressed at low level in cerebellum as compared to cortex.

The protein resides in the cytoplasm. It localises to the cytosol. The protein localises to the cytoskeleton. Its subcellular location is the microtubule organizing center. It is found in the centrosome. The protein resides in the centriole. It localises to the golgi apparatus. The protein localises to the cilium basal body. The catalysed reaction is (L-glutamyl)(n+1)-gamma-L-glutamyl-L-glutamyl-[protein] + H2O = (L-glutamyl)(n)-gamma-L-glutamyl-L-glutamyl-[protein] + L-glutamate. It catalyses the reaction C-terminal L-alpha-aminoacyl-L-glutamyl-L-glutamyl-[tubulin] + H2O = C-terminal L-alpha-aminoacyl-L-glutamyl-[tubulin] + L-glutamate. In terms of biological role, metallocarboxypeptidase that mediates protein deglutamylation of tubulin and non-tubulin target proteins. Catalyzes the removal of polyglutamate side chains present on the gamma-carboxyl group of glutamate residues within the C-terminal tail of tubulin protein. Specifically cleaves tubulin long-side-chains, while it is not able to remove the branching point glutamate. Also catalyzes the removal of polyglutamate residues from the carboxy-terminus of non-tubulin proteins such as MYLK. Mediates the deglutamylation of nucleotidyltransferase CGAS, leading to CGAS antiviral defense response activation. Involved in KLF4 deglutamylation which promotes KLF4 proteasome-mediated degradation, thereby negatively regulating cell pluripotency maintenance and embryogenesis. The chain is Cytosolic carboxypeptidase 6 from Mus musculus (Mouse).